Reading from the N-terminus, the 168-residue chain is Translationally-controlled tumor protein homolog (168 aa).

Residues 1-168 (MLLYKDVISG…FKDGLVSEKF (168 aa)) enclose the TCTP domain. Phosphoserine is present on Ser78.

It belongs to the TCTP family.

The protein localises to the cytoplasm. Functionally, involved in calcium binding and microtubule stabilization. May be a guanine nucleotide-free chaperone (GFC). In Schizosaccharomyces pombe (strain 972 / ATCC 24843) (Fission yeast), this protein is Translationally-controlled tumor protein homolog (p23fy).